The chain runs to 684 residues: Histamine oxidase (684 aa).

316 to 327 (YFDSGEYLVGRD) provides a ligand contact to substrate. Asp-318 functions as the Proton acceptor in the catalytic mechanism. Cys-337 and Cys-363 are disulfide-bonded. 399–404 (VGNYDY) contributes to the substrate binding site. The Schiff-base intermediate with substrate; via topaquinone role is filled by Tyr-402. The residue at position 402 (Tyr-402) is a 2',4',5'-topaquinone. Residues His-451 and His-453 each contribute to the Cu cation site. Ca(2+)-binding residues include Asp-460, Glu-500, Tyr-590, and Asp-601. A Mn(2+)-binding site is contributed by Asp-460. A Mn(2+)-binding site is contributed by Asp-601. His-612 is a binding site for Cu cation. Residues 647–684 (SSAAGHCGTGSEREHAAPGGTAVGHSGPDTGGQGHCGH) are disordered. The segment covering 675 to 684 (DTGGQGHCGH) has biased composition (gly residues).

Belongs to the copper/topaquinone oxidase family. In terms of assembly, homodimer. Cu cation is required as a cofactor. Zn(2+) serves as cofactor. It depends on Ca(2+) as a cofactor. Requires L-topaquinone as cofactor. The cofactor is Mn(2+). In terms of processing, topaquinone (TPQ) is generated by copper-dependent autoxidation of a specific tyrosyl residue.

It is found in the cytoplasm. It carries out the reaction a primary methyl amine + O2 + H2O = an aldehyde + H2O2 + NH4(+). It catalyses the reaction histamine + O2 + H2O = imidazole-4-acetaldehyde + H2O2 + NH4(+). Functionally, oxidizes histamine. Other amines including phenethylamine, tyramine, tryptamine, putrescine, and benzylamine also serve as substrate. In Arthrobacter globiformis, this protein is Histamine oxidase.